The sequence spans 179 residues: Ribosomal-protein-serine acetyltransferase (179 aa).

In terms of domain architecture, N-acetyltransferase spans 11 to 172 (LELHAVAENH…NDAYDDVNLY (162 aa)).

Belongs to the acetyltransferase family. RimL subfamily.

It localises to the cytoplasm. It carries out the reaction N-terminal L-seryl-[ribosomal protein bL12] + acetyl-CoA = N-terminal N(alpha)-acetyl-L-seryl-[ribosomal protein bL12] + CoA + H(+). Functionally, this enzyme acetylates the N-terminal serine of ribosomal protein bL12, converting it into the acetylated form of bL12 known as bL7. This is Ribosomal-protein-serine acetyltransferase from Escherichia coli (strain K12).